Reading from the N-terminus, the 201-residue chain is Type III effector protein HopBF1 (201 aa).

ATP-binding residues include S39, Q40, K41, D106, I108, and D113. Residue D154 is part of the active site. Q156 is an ATP binding site.

Belongs to the HopBF1 family.

It localises to the secreted. It is found in the host cell. The catalysed reaction is L-seryl-[protein] + ATP = O-phospho-L-seryl-[protein] + ADP + H(+). Functionally, effector protein that targets and inactivates the plant molecular chaperone HSP90 during infection. HopBF1 is recognized by HSP90 as a host client. As a result, HopBF1 phosphorylates HSP90, leading to the inactivation of the HSP90 ATPase activity and chaperone function. Phosphorylation of HSP90 prevents activation of immune receptors that trigger the hypersensitive response in plants. HopBF1 is sufficient to cause severe disease symptoms in plants infected with P.syringae. In vitro, can phosphorylate the recombinant yeast HSP82 (HSP90) on Ser-99, Triticum aestivum (wheat) HSP90 and human HSP 90-beta, but not the prokaryotic HSP90 orthologs, HtpG from E.coli and P.syringae. Does not act on generic protein kinase substrates such as casein and myelin basic protein, as well as the yeast HSP70s and Bip chaperones. The polypeptide is Type III effector protein HopBF1 (Pseudomonas syringae pv. syringae (strain FF5)).